A 295-amino-acid polypeptide reads, in one-letter code: (R)-3-hydroxydecanoyl-ACP:CoA transacylase (295 aa).

One can recognise an AB hydrolase-1 domain in the interval 28-254 (NTIILINGSL…VIRDAGHFLD (227 aa)).

It functions in the pathway polyester biosynthesis; polyhydroxyalkanoate biosynthesis. Functionally, catalyzes the transfer of the acyl moiety from in vitro synthesized 3-hydroxydecanoyl-CoA to acyl carrier protein. The protein is (R)-3-hydroxydecanoyl-ACP:CoA transacylase (phaG) of Pseudomonas putida (strain ATCC 47054 / DSM 6125 / CFBP 8728 / NCIMB 11950 / KT2440).